A 299-amino-acid chain; its full sequence is Bifunctional protein FolD 1 (299 aa).

NADP(+) contacts are provided by residues 168–170 (GRS), S193, and I234.

Belongs to the tetrahydrofolate dehydrogenase/cyclohydrolase family. As to quaternary structure, homodimer.

The catalysed reaction is (6R)-5,10-methylene-5,6,7,8-tetrahydrofolate + NADP(+) = (6R)-5,10-methenyltetrahydrofolate + NADPH. It catalyses the reaction (6R)-5,10-methenyltetrahydrofolate + H2O = (6R)-10-formyltetrahydrofolate + H(+). It participates in one-carbon metabolism; tetrahydrofolate interconversion. Its function is as follows. Catalyzes the oxidation of 5,10-methylenetetrahydrofolate to 5,10-methenyltetrahydrofolate and then the hydrolysis of 5,10-methenyltetrahydrofolate to 10-formyltetrahydrofolate. The polypeptide is Bifunctional protein FolD 1 (Rhizobium etli (strain ATCC 51251 / DSM 11541 / JCM 21823 / NBRC 15573 / CFN 42)).